The sequence spans 418 residues: Tryptophan synthase beta chain (418 aa).

Positions 1–18 (MTSTLPNASTPDPASLQP) are enriched in polar residues. The interval 1–23 (MTSTLPNASTPDPASLQPSVRPG) is disordered. Lysine 111 carries the N6-(pyridoxal phosphate)lysine modification.

This sequence belongs to the TrpB family. In terms of assembly, tetramer of two alpha and two beta chains. Pyridoxal 5'-phosphate serves as cofactor.

It catalyses the reaction (1S,2R)-1-C-(indol-3-yl)glycerol 3-phosphate + L-serine = D-glyceraldehyde 3-phosphate + L-tryptophan + H2O. It participates in amino-acid biosynthesis; L-tryptophan biosynthesis; L-tryptophan from chorismate: step 5/5. Functionally, the beta subunit is responsible for the synthesis of L-tryptophan from indole and L-serine. The protein is Tryptophan synthase beta chain of Parasynechococcus marenigrum (strain WH8102).